The sequence spans 339 residues: DNA-directed RNA polymerase subunit alpha (339 aa).

Residues Met-1–Glu-233 form an alpha N-terminal domain (alpha-NTD) region. The interval Lys-267–Lys-339 is alpha C-terminal domain (alpha-CTD).

It belongs to the RNA polymerase alpha chain family. In plastids the minimal PEP RNA polymerase catalytic core is composed of four subunits: alpha, beta, beta', and beta''. When a (nuclear-encoded) sigma factor is associated with the core the holoenzyme is formed, which can initiate transcription.

The protein resides in the plastid. The protein localises to the chloroplast. It carries out the reaction RNA(n) + a ribonucleoside 5'-triphosphate = RNA(n+1) + diphosphate. Its function is as follows. DNA-dependent RNA polymerase catalyzes the transcription of DNA into RNA using the four ribonucleoside triphosphates as substrates. The polypeptide is DNA-directed RNA polymerase subunit alpha (Piper cenocladum (Ant piper)).